Reading from the N-terminus, the 552-residue chain is Dihydroxy-acid dehydratase (552 aa).

Aspartate 78 provides a ligand contact to Mg(2+). Cysteine 119 is a binding site for [2Fe-2S] cluster. Residues aspartate 120 and lysine 121 each contribute to the Mg(2+) site. The residue at position 121 (lysine 121) is an N6-carboxylysine. A [2Fe-2S] cluster-binding site is contributed by cysteine 191. Glutamate 442 lines the Mg(2+) pocket. The active-site Proton acceptor is the serine 468.

The protein belongs to the IlvD/Edd family. Homodimer. Requires [2Fe-2S] cluster as cofactor. It depends on Mg(2+) as a cofactor.

It catalyses the reaction (2R)-2,3-dihydroxy-3-methylbutanoate = 3-methyl-2-oxobutanoate + H2O. The enzyme catalyses (2R,3R)-2,3-dihydroxy-3-methylpentanoate = (S)-3-methyl-2-oxopentanoate + H2O. It functions in the pathway amino-acid biosynthesis; L-isoleucine biosynthesis; L-isoleucine from 2-oxobutanoate: step 3/4. Its pathway is amino-acid biosynthesis; L-valine biosynthesis; L-valine from pyruvate: step 3/4. Functionally, functions in the biosynthesis of branched-chain amino acids. Catalyzes the dehydration of (2R,3R)-2,3-dihydroxy-3-methylpentanoate (2,3-dihydroxy-3-methylvalerate) into 2-oxo-3-methylpentanoate (2-oxo-3-methylvalerate) and of (2R)-2,3-dihydroxy-3-methylbutanoate (2,3-dihydroxyisovalerate) into 2-oxo-3-methylbutanoate (2-oxoisovalerate), the penultimate precursor to L-isoleucine and L-valine, respectively. The chain is Dihydroxy-acid dehydratase from Caldicellulosiruptor bescii (strain ATCC BAA-1888 / DSM 6725 / KCTC 15123 / Z-1320) (Anaerocellum thermophilum).